The chain runs to 69 residues: Conotoxin Eb6.21 (69 aa).

Residues 1 to 17 (VLIIAVLFLTACQLTTA) form the signal peptide. The propeptide occupies 18-41 (ETYSRGRQKHRARRSTDKNSKWTR). Cystine bridges form between C43/C57, C50/C61, and C56/C68.

The protein belongs to the conotoxin O1 superfamily. Expressed by the venom duct.

Its subcellular location is the secreted. This is Conotoxin Eb6.21 (E1) from Conus ebraeus (Hebrew cone).